Here is a 169-residue protein sequence, read N- to C-terminus: Crossover junction endodeoxyribonuclease RuvC (169 aa).

Catalysis depends on residues Asp-11, Glu-71, and Asp-143. Asp-11, Glu-71, and Asp-143 together coordinate Mg(2+).

Belongs to the RuvC family. In terms of assembly, homodimer which binds Holliday junction (HJ) DNA. The HJ becomes 2-fold symmetrical on binding to RuvC with unstacked arms; it has a different conformation from HJ DNA in complex with RuvA. In the full resolvosome a probable DNA-RuvA(4)-RuvB(12)-RuvC(2) complex forms which resolves the HJ. Requires Mg(2+) as cofactor.

It is found in the cytoplasm. It carries out the reaction Endonucleolytic cleavage at a junction such as a reciprocal single-stranded crossover between two homologous DNA duplexes (Holliday junction).. Functionally, the RuvA-RuvB-RuvC complex processes Holliday junction (HJ) DNA during genetic recombination and DNA repair. Endonuclease that resolves HJ intermediates. Cleaves cruciform DNA by making single-stranded nicks across the HJ at symmetrical positions within the homologous arms, yielding a 5'-phosphate and a 3'-hydroxyl group; requires a central core of homology in the junction. The consensus cleavage sequence is 5'-(A/T)TT(C/G)-3'. Cleavage occurs on the 3'-side of the TT dinucleotide at the point of strand exchange. HJ branch migration catalyzed by RuvA-RuvB allows RuvC to scan DNA until it finds its consensus sequence, where it cleaves and resolves the cruciform DNA. The sequence is that of Crossover junction endodeoxyribonuclease RuvC from Rhizobium leguminosarum bv. trifolii (strain WSM2304).